Here is a 286-residue protein sequence, read N- to C-terminus: Tyrosine recombinase Tlet_1492 (286 aa).

A Core-binding (CB) domain is found at Met-1 to Gln-86. In terms of domain architecture, Tyr recombinase spans Arg-107–Asn-280. Residues Arg-143, Lys-168, His-232, Arg-235, and His-258 contribute to the active site. Tyr-267 serves as the catalytic O-(3'-phospho-DNA)-tyrosine intermediate.

The protein belongs to the 'phage' integrase family.

Its subcellular location is the cytoplasm. In terms of biological role, site-specific tyrosine recombinase, which acts by catalyzing the cutting and rejoining of the recombining DNA molecules. The protein is Tyrosine recombinase Tlet_1492 of Pseudothermotoga lettingae (strain ATCC BAA-301 / DSM 14385 / NBRC 107922 / TMO) (Thermotoga lettingae).